A 388-amino-acid polypeptide reads, in one-letter code: 1-deoxy-D-xylulose 5-phosphate reductoisomerase (388 aa).

NADPH-binding residues include Thr10, Gly11, Thr12, Ile13, Arg37, Gln38, and Asn122. Lys123 contacts 1-deoxy-D-xylulose 5-phosphate. Glu124 contacts NADPH. Asp148 is a Mn(2+) binding site. Positions 149, 150, 179, and 202 each coordinate 1-deoxy-D-xylulose 5-phosphate. Glu150 is a Mn(2+) binding site. NADPH is bound at residue Gly208. The 1-deoxy-D-xylulose 5-phosphate site is built by Ser215, Asn220, Lys221, and Glu224. Glu224 lines the Mn(2+) pocket.

The protein belongs to the DXR family. Mg(2+) serves as cofactor. Requires Mn(2+) as cofactor.

The enzyme catalyses 2-C-methyl-D-erythritol 4-phosphate + NADP(+) = 1-deoxy-D-xylulose 5-phosphate + NADPH + H(+). It participates in isoprenoid biosynthesis; isopentenyl diphosphate biosynthesis via DXP pathway; isopentenyl diphosphate from 1-deoxy-D-xylulose 5-phosphate: step 1/6. Functionally, catalyzes the NADPH-dependent rearrangement and reduction of 1-deoxy-D-xylulose-5-phosphate (DXP) to 2-C-methyl-D-erythritol 4-phosphate (MEP). This is 1-deoxy-D-xylulose 5-phosphate reductoisomerase from Laribacter hongkongensis (strain HLHK9).